A 205-amino-acid polypeptide reads, in one-letter code: Probable GTP-binding protein EngB (205 aa).

The EngB-type G domain occupies 27–201 (TGIEIAFAGR…AVKLDFWFSP (175 aa)). Residues 35–42 (GRSNAGKS), 62–66 (GRTQL), 80–83 (DLPG), 147–150 (TKAD), and 180–182 (FSA) contribute to the GTP site. 2 residues coordinate Mg(2+): Ser42 and Thr64.

Belongs to the TRAFAC class TrmE-Era-EngA-EngB-Septin-like GTPase superfamily. EngB GTPase family. Mg(2+) serves as cofactor.

Necessary for normal cell division and for the maintenance of normal septation. The polypeptide is Probable GTP-binding protein EngB (Haemophilus influenzae (strain PittGG)).